Here is a 137-residue protein sequence, read N- to C-terminus: uncharacterized protein (137 aa).

Residues 4-73 (MLTVSEVARK…LEEIADILHL (70 aa)) enclose the HTH merR-type domain. A DNA-binding region (H-T-H motif) is located at residues 8-27 (SEVARKLGLNPQTLYFYERI).

This is an uncharacterized protein from Synechocystis sp. (strain ATCC 27184 / PCC 6803 / Kazusa).